The sequence spans 99 residues: uncharacterized protein (99 aa).

The stretch at E43–G95 forms a coiled coil.

This is an uncharacterized protein from Archaeoglobus fulgidus (strain ATCC 49558 / DSM 4304 / JCM 9628 / NBRC 100126 / VC-16).